Here is a 182-residue protein sequence, read N- to C-terminus: MSSQIALSPAIAAAIRRPSSHDCLSASATTATATPMALKSCIVAPLSLFTSQSQIKHSSSRKTSRTTIRCDVAIKSADSINADANPSSSPSSEEEIEAEAKAKIGSRVRVTAPLKVYHVNRVPEVDLEGMEGKLKDYVAVWKGKRISANLPYKIEFFKEIEGRGLVKFVSHLKEDEFEFIDQ.

The N-terminal 81 residues, 1-81 (MSSQIALSPA…VAIKSADSIN (81 aa)), are a transit peptide targeting the chloroplast.

This sequence belongs to the ferredoxin thioredoxin reductase alpha subunit family. As to quaternary structure, heterodimer of subunit A (variable subunit) and subunit B (catalytic subunit). Heterodimeric FTR forms a complex with ferredoxin and thioredoxin.

It is found in the plastid. It localises to the chloroplast. Functionally, variable subunit of the ferredoxin-thioredoxin reductase (FTR), which catalyzes the two-electron reduction of thioredoxins by the electrons provided by reduced ferredoxin. The sequence is that of Ferredoxin-thioredoxin reductase subunit A1, chloroplastic from Arabidopsis thaliana (Mouse-ear cress).